Reading from the N-terminus, the 314-residue chain is MDLVRLTSLLPPSVMGGPTSPRPLWSNQGLPFRFQSKNRFSPVAAARASHAASPAELYWKIALPTSPMPGAIRDLINPARSASQEDTDMDEVSTDAVFFLEKDLFPGSKITLHFTRGGACAMVLLRGRADAIPFASEKLPEILTQLSVPAGSRAAEDMRTTLAECEAALLGARDQAKHCVTSLESMVEFAAASLGTRDIRAVSTEVIGTGAAETPRQEYTVEAVKPVVSVSGGNMVTCHGMPYAYAVFGCHTTTATAYAVTLAGADGTRAEALATCHGDAFPGVAEAYERVGVAAGSVPVCHIMPLGDMLWVRN.

An N-terminal signal peptide occupies residues 1–16; the sequence is MDLVRLTSLLPPSVMG. Residues 98 to 314 enclose the BURP domain; it reads FFLEKDLFPG…PLGDMLWVRN (217 aa).

In terms of tissue distribution, expressed in shoot and panicles.

The chain is BURP domain-containing protein 8 (BURP8) from Oryza sativa subsp. japonica (Rice).